A 242-amino-acid chain; its full sequence is Biosynthetic peptidoglycan transglycosylase (242 aa).

The chain crosses the membrane as a helical span at residues 19-39 (LMVVLAIFWGGGIALFSVAPV).

The protein belongs to the glycosyltransferase 51 family.

Its subcellular location is the cell inner membrane. It catalyses the reaction [GlcNAc-(1-&gt;4)-Mur2Ac(oyl-L-Ala-gamma-D-Glu-L-Lys-D-Ala-D-Ala)](n)-di-trans,octa-cis-undecaprenyl diphosphate + beta-D-GlcNAc-(1-&gt;4)-Mur2Ac(oyl-L-Ala-gamma-D-Glu-L-Lys-D-Ala-D-Ala)-di-trans,octa-cis-undecaprenyl diphosphate = [GlcNAc-(1-&gt;4)-Mur2Ac(oyl-L-Ala-gamma-D-Glu-L-Lys-D-Ala-D-Ala)](n+1)-di-trans,octa-cis-undecaprenyl diphosphate + di-trans,octa-cis-undecaprenyl diphosphate + H(+). The protein operates within cell wall biogenesis; peptidoglycan biosynthesis. In terms of biological role, peptidoglycan polymerase that catalyzes glycan chain elongation from lipid-linked precursors. This chain is Biosynthetic peptidoglycan transglycosylase, found in Escherichia coli O81 (strain ED1a).